A 428-amino-acid chain; its full sequence is Histone-lysine N-methyltransferase SMYD3 (428 aa).

The residue at position 1 (M1) is an N-acetylmethionine. The region spanning 4-240 (LKVEKFATAK…VGEELTICYL (237 aa)) is the SET domain. 14–16 (RGN) is an S-adenosyl-L-methionine binding site. At T22 the chain carries Phosphothreonine. Zn(2+) contacts are provided by C49, C52, C62, C65, C71, C75, H83, and C87. The MYND-type zinc-finger motif lies at 49 to 87 (CDRCLLGKEKLMRCSQCRVAKYCSAKCQKKAWPDHKREC). Residues Y124, N132, N181, 205 to 206 (NH), Y239, and F259 each bind S-adenosyl-L-methionine. Residues 272-428 (DADMLTGDEQ…EECDANIRAS (157 aa)) are C-terminal domain; essential for histone methyltransferase activity, nuclear localization and mediates interaction with HSP90AA1.

This sequence belongs to the class V-like SAM-binding methyltransferase superfamily. Histone-lysine methyltransferase family. In terms of assembly, interacts with HSPCA. Interacts with HELZ. Interacts with POLR2A; the interaction may be indirect and may be mediated by HELZ. Interacts with HSP90AA1; this interaction enhances SMYD3 histone-lysine N-methyltransferase. Expressed in skeletal muscles and testis. Overexpressed in a majority of colorectal and hepatocellular carcinomas.

The protein localises to the cytoplasm. The protein resides in the nucleus. The enzyme catalyses L-lysyl(4)-[histone H3] + 3 S-adenosyl-L-methionine = N(6),N(6),N(6)-trimethyl-L-lysyl(4)-[histone H3] + 3 S-adenosyl-L-homocysteine + 3 H(+). Its activity is regulated as follows. Histone methyltransferase activity strongly stimulated by HSPCA. Functionally, histone methyltransferase. Specifically methylates 'Lys-4' of histone H3, inducing di- and tri-methylation, but not monomethylation. Also methylates 'Lys-5' of histone H4. Plays an important role in transcriptional activation as a member of an RNA polymerase complex. Binds DNA containing 5'-CCCTCC-3' or 5'-GAGGGG-3' sequences. The protein is Histone-lysine N-methyltransferase SMYD3 (SMYD3) of Homo sapiens (Human).